Here is a 116-residue protein sequence, read N- to C-terminus: NADH-ubiquinone oxidoreductase chain 3 (116 aa).

The next 3 helical transmembrane spans lie at 3 to 23 (LLMT…IVSF), 56 to 76 (FFLI…LLPL), and 85 to 105 (PLLT…GLIY).

It belongs to the complex I subunit 3 family.

It localises to the mitochondrion membrane. The enzyme catalyses a ubiquinone + NADH + 5 H(+)(in) = a ubiquinol + NAD(+) + 4 H(+)(out). Its function is as follows. Core subunit of the mitochondrial membrane respiratory chain NADH dehydrogenase (Complex I) that is believed to belong to the minimal assembly required for catalysis. Complex I functions in the transfer of electrons from NADH to the respiratory chain. The immediate electron acceptor for the enzyme is believed to be ubiquinone. The polypeptide is NADH-ubiquinone oxidoreductase chain 3 (MT-ND3) (Paralichthys olivaceus (Bastard halibut)).